The primary structure comprises 275 residues: Interleukin-2 receptor subunit alpha (275 aa).

The N-terminal stretch at methionine 1–threonine 21 is a signal peptide. 2 consecutive Sushi domains span residues glutamate 22–serine 81 and glycine 121–serine 186. Residues glutamate 22–glutamine 243 are Extracellular-facing. 3 disulfides stabilise this stretch: cysteine 24–cysteine 64, cysteine 49–cysteine 77, and cysteine 51–cysteine 79. Asparagine 80 is a glycosylation site (N-linked (GlcNAc...) asparagine). Positions lysine 86–glutamate 130 are disordered. Residues glycine 121–glutamate 130 are compositionally biased toward basic and acidic residues. Cystine bridges form between cysteine 123/cysteine 168 and cysteine 152/cysteine 184. The disordered stretch occupies residues glycine 188–leucine 213. The helical transmembrane segment at isoleucine 244–leucine 262 threads the bilayer. Residues threonine 263–isoleucine 275 are Cytoplasmic-facing.

Non-covalent dimer of an alpha and a beta subunit. IL2R exists in 3 different forms: a high affinity dimer, an intermediate affinity monomer (beta subunit), and a low affinity monomer (alpha subunit). The high and intermediate affinity forms also associate with a gamma subunit.

It is found in the membrane. Receptor for interleukin-2. The receptor is involved in the regulation of immune tolerance by controlling regulatory T cells (TREGs) activity. TREGs suppress the activation and expansion of autoreactive T-cells. This is Interleukin-2 receptor subunit alpha (IL2RA) from Ovis aries (Sheep).